The sequence spans 262 residues: Ornithine carbamoyltransferase (262 aa).

Carbamoyl phosphate contacts are provided by residues 3–7 (STRTR), Gln30, Arg54, and 81–84 (HPTQ). Residues Asn114, Asp178, and 182–183 (SM) contribute to the L-ornithine site. Carbamoyl phosphate contacts are provided by residues 219 to 222 (HCLP) and Thr247.

The protein belongs to the aspartate/ornithine carbamoyltransferase superfamily. OTCase family.

The protein localises to the cytoplasm. It carries out the reaction carbamoyl phosphate + L-ornithine = L-citrulline + phosphate + H(+). Its pathway is amino-acid biosynthesis; L-arginine biosynthesis; L-arginine from L-ornithine and carbamoyl phosphate: step 1/3. In terms of biological role, reversibly catalyzes the transfer of the carbamoyl group from carbamoyl phosphate (CP) to the N(epsilon) atom of ornithine (ORN) to produce L-citrulline. The polypeptide is Ornithine carbamoyltransferase (argF) (Neisseria lactamica).